Here is a 497-residue protein sequence, read N- to C-terminus: Probable malate:quinone oxidoreductase (497 aa).

The protein belongs to the MQO family. Requires FAD as cofactor.

The catalysed reaction is (S)-malate + a quinone = a quinol + oxaloacetate. The protein operates within carbohydrate metabolism; tricarboxylic acid cycle; oxaloacetate from (S)-malate (quinone route): step 1/1. The sequence is that of Probable malate:quinone oxidoreductase from Prochlorococcus marinus (strain MIT 9515).